A 142-amino-acid chain; its full sequence is Hemoglobin subunit alpha-1 (142 aa).

Positions leucine 2 to arginine 142 constitute a Globin domain. Residue histidine 59 participates in O2 binding. Histidine 88 provides a ligand contact to heme b.

The protein belongs to the globin family. As to quaternary structure, heterotetramer of two alpha chains and two beta chains. As to expression, red blood cells.

Functionally, involved in oxygen transport from the lung to the various peripheral tissues. In Xenopus borealis (Kenyan clawed frog), this protein is Hemoglobin subunit alpha-1 (hba1).